We begin with the raw amino-acid sequence, 307 residues long: MLVYIAGSGAMGCRFGYQISKTNNDVILLDNWEDHINAIKENGLVVTGDVEETVKLPIMKPTEATQEADLIILFTKAMQLPQMLQDIKGIIGKETKVLCLLNGLGHEDVIRQYIPEHNILMGVTVWTAGLEGPGRAHLQGVGALNLQSMDPNNQDAGHQVADLLNKANLNATYDENVVPNIWRKACVNGTMNSTCALLDCTIGELFASEDGLKMVKEIIHEFVIVGQAEGVELNEEEITQYVMDTSVKAAHHYPSMHQDLVQNHRLTEIDFINGAVNTKGEKLGINTPYCRMITELVHAKEAVLNIQ.

NADP(+)-binding positions include 7–12 (GSGAMG), N102, and A128. Position 102 (N102) interacts with substrate. Catalysis depends on K184, which acts as the Proton donor. The substrate site is built by N188, N192, and S255. NADP(+) is bound at residue E268.

This sequence belongs to the ketopantoate reductase family.

The protein localises to the cytoplasm. The enzyme catalyses (R)-pantoate + NADP(+) = 2-dehydropantoate + NADPH + H(+). It functions in the pathway cofactor biosynthesis; (R)-pantothenate biosynthesis; (R)-pantoate from 3-methyl-2-oxobutanoate: step 2/2. Functionally, catalyzes the NADPH-dependent reduction of ketopantoate into pantoic acid. This Streptococcus pyogenes serotype M18 (strain MGAS8232) protein is 2-dehydropantoate 2-reductase (apbA).